The sequence spans 85 residues: DNA-directed RNA polymerase subunit beta'' (85 aa).

Belongs to the RNA polymerase beta' chain family. RpoC2 subfamily. In plastids the minimal PEP RNA polymerase catalytic core is composed of four subunits: alpha, beta, beta', and beta''. When a (nuclear-encoded) sigma factor is associated with the core the holoenzyme is formed, which can initiate transcription.

The protein localises to the plastid. The protein resides in the chloroplast. The catalysed reaction is RNA(n) + a ribonucleoside 5'-triphosphate = RNA(n+1) + diphosphate. Its function is as follows. DNA-dependent RNA polymerase catalyzes the transcription of DNA into RNA using the four ribonucleoside triphosphates as substrates. In Galdieria sulphuraria (Red alga), this protein is DNA-directed RNA polymerase subunit beta'' (rpoC2).